The following is a 138-amino-acid chain: Large-conductance mechanosensitive channel (138 aa).

2 helical membrane-spanning segments follow: residues 19–39 (VGVI…GDVI) and 81–101 (GSFL…FLVI).

Belongs to the MscL family. Homopentamer.

The protein resides in the cell inner membrane. In terms of biological role, channel that opens in response to stretch forces in the membrane lipid bilayer. May participate in the regulation of osmotic pressure changes within the cell. This is Large-conductance mechanosensitive channel from Bradyrhizobium diazoefficiens (strain JCM 10833 / BCRC 13528 / IAM 13628 / NBRC 14792 / USDA 110).